A 384-amino-acid polypeptide reads, in one-letter code: Transcription factor 7 (384 aa).

Residues 1–16 (MPQLDSGGGGAGGGDD) show a composition bias toward gly residues. Residues 1–59 (MPQLDSGGGGAGGGDDLGAPDELLAFQDEGEEQDDKSRDSAAGPERDLAELKSSLVNES) form a CTNNB1-binding region. Disordered regions lie at residues 1–88 (MPQL…LGRE), 133–183 (PPSG…QKQV), and 337–384 (SARD…MTVL). Over residues 35-50 (DKSRDSAAGPERDLAE) the composition is skewed to basic and acidic residues. Gly residues predominate over residues 62-78 (AAGGAGIPGVPGAGAGA). The segment at residues 269-337 (IKKPLNAFML…LHMQLYPGWS (69 aa)) is a DNA-binding region (HMG box). Residues 344–348 (KKKRR) carry the Nuclear localization signal motif. Over residues 352–370 (KHQESTTGGKRNAFGTYPE) the composition is skewed to basic and acidic residues. Low complexity predominate over residues 374–384 (APAPFLPMTVL).

It belongs to the TCF/LEF family. In terms of assembly, binds the armadillo repeat of CTNNB1 and forms a stable complex. Interacts with TLE5, TLE1, TLE2, TLE3 and TLE4. Interacts with MLLT11. Long isoform interacts (via N-terminus) with SOX13; inhibits WNT-mediated transcriptional activity. Interacts with DAZAP2. Predominantly expressed in T-cells. Also detected in proliferating intestinal epithelial cells and in the basal epithelial cells of mammary gland epithelium.

It is found in the nucleus. Functionally, transcriptional activator involved in T-cell lymphocyte differentiation. Necessary for the survival of CD4(+) CD8(+) immature thymocytes. Isoforms lacking the N-terminal CTNNB1 binding domain cannot fulfill this role. Binds to the T-lymphocyte-specific enhancer element (5'-WWCAAAG-3') found in the promoter of the CD3E gene. Represses expression of the T-cell receptor gamma gene in alpha-beta T-cell lineages. Required for the development of natural killer receptor-positive lymphoid tissue inducer T-cells. TLE1, TLE2, TLE3 and TLE4 repress transactivation mediated by TCF7 and CTNNB1. May also act as feedback transcriptional repressor of CTNNB1 and TCF7L2 target genes. The chain is Transcription factor 7 from Homo sapiens (Human).